A 293-amino-acid chain; its full sequence is Ethanolamine ammonia-lyase small subunit (293 aa).

Residues V207 and E228 each contribute to the adenosylcob(III)alamin site.

This sequence belongs to the EutC family. As to quaternary structure, the basic unit is a heterodimer which dimerizes to form tetramers. The heterotetramers trimerize; 6 large subunits form a core ring with 6 small subunits projecting outwards. It depends on adenosylcob(III)alamin as a cofactor.

The protein resides in the bacterial microcompartment. The catalysed reaction is ethanolamine = acetaldehyde + NH4(+). It functions in the pathway amine and polyamine degradation; ethanolamine degradation. Its function is as follows. Catalyzes the deamination of various vicinal amino-alcohols to oxo compounds. Allows this organism to utilize ethanolamine as the sole source of nitrogen and carbon in the presence of external vitamin B12. This Listeria monocytogenes serotype 4a (strain HCC23) protein is Ethanolamine ammonia-lyase small subunit.